Here is a 316-residue protein sequence, read N- to C-terminus: Glycerol-3-phosphate dehydrogenase [NAD(P)+] (316 aa).

NADPH contacts are provided by serine 14, phenylalanine 15, arginine 35, and lysine 109. Sn-glycerol 3-phosphate contacts are provided by lysine 109 and glycine 137. An NADPH-binding site is contributed by alanine 141. Residues lysine 192, aspartate 248, serine 258, arginine 259, and asparagine 260 each contribute to the sn-glycerol 3-phosphate site. Lysine 192 acts as the Proton acceptor in catalysis. Residue arginine 259 coordinates NADPH. NADPH-binding residues include leucine 283 and glutamate 285.

Belongs to the NAD-dependent glycerol-3-phosphate dehydrogenase family.

It localises to the cytoplasm. The enzyme catalyses sn-glycerol 3-phosphate + NAD(+) = dihydroxyacetone phosphate + NADH + H(+). It catalyses the reaction sn-glycerol 3-phosphate + NADP(+) = dihydroxyacetone phosphate + NADPH + H(+). It participates in membrane lipid metabolism; glycerophospholipid metabolism. Its function is as follows. Catalyzes the reduction of the glycolytic intermediate dihydroxyacetone phosphate (DHAP) to sn-glycerol 3-phosphate (G3P), the key precursor for phospholipid synthesis. This chain is Glycerol-3-phosphate dehydrogenase [NAD(P)+], found in Rickettsia prowazekii (strain Madrid E).